Consider the following 850-residue polypeptide: Transforming growth factor beta receptor type 3 (850 aa).

Residues 1–22 (MAVTSHHMVPVFVLMSACLATA) form the signal peptide. The Extracellular portion of the chain corresponds to 23–785 (GPEPSTRCEL…QIFHGLDTLT (763 aa)). A disulfide bridge links cysteine 54 with cysteine 199. Residues asparagine 143 and asparagine 491 are each glycosylated (N-linked (GlcNAc...) asparagine). The 275-residue stretch at 454-728 (KCDNEKMVVA…PKCVTPDDAC (275 aa)) folds into the ZP domain. The interval 528–557 (SPGDSSGWPDGYEDLESGDNGFPGDTDEGE) is disordered. Residues serine 533 and serine 544 are each glycosylated (O-linked (Xyl...) (glycosaminoglycan) serine). N-linked (GlcNAc...) asparagine glycosylation is found at asparagine 570, asparagine 589, and asparagine 696. 3 cysteine pairs are disulfide-bonded: cysteine 638–cysteine 704, cysteine 659–cysteine 728, and cysteine 709–cysteine 721. Positions 735-749 (MIWTMMQNKKTFTKP) are interaction with TGF-beta ligand. The helical transmembrane segment at 786–808 (VMGIAFAAFVIGALLTGALWYIY) threads the bilayer. Residues 809 to 850 (SHTGETARRQQVPTSPPASENSSAAHSIGSTQSTPCSSSSTA) are Cytoplasmic-facing. The span at 817–833 (RQQVPTSPPASENSSAA) shows a compositional bias: polar residues. Positions 817-850 (RQQVPTSPPASENSSAAHSIGSTQSTPCSSSSTA) are disordered. A compositionally biased stretch (low complexity) spans 835–850 (SIGSTQSTPCSSSSTA). Phosphothreonine is present on threonine 839.

In terms of assembly, forms homodimers and homooligomers. Interacts with DYNLT4. Interacts with integrin ITGA5:ITGB1; this interaction promotes the internalization and trafficking of ITGA5:ITGB1 into endocytic vesicles. Interacts with TGFB1, BMP2, BMP5, BMP7 or GDF5 and inhibin A via the ligand binding domains. Interacts with ALK3/BMPR1A; this interaction results in the cell surface retention of BMPR1A. Interacts with ALK6/BMPR1B; this interaction enhances BMPR1B-mediated stimulation of the BMP signaling pathway. Interacts with the scaffolding protein beta-arrestin2/ARRB2; this interaction mediates internalization of TGFBR3 and thus regulates migration, actin cytoskeleton and activation of CDC42. In terms of processing, extensively modified by glycosaminoglycan groups (GAG). Post-translationally, phosphorylated in the cytoplasmic domain by the type II receptor TGFBR2 at THR-839 to mediate recruitment of ARRB2 and subsequent internalization of TGFBR2 and TGFBR3.

It localises to the cell membrane. Its subcellular location is the secreted. It is found in the extracellular space. The protein resides in the extracellular matrix. Cell surface receptor that regulates diverse cellular processes including cell proliferation, differentiation, migration, and apoptosis. Initiates BMP, inhibin, and TGF-beta signaling pathways by interacting with different ligands including TGFB1, BMP2, BMP5, BMP7 or GDF5. Alternatively, acts as a cell surface coreceptor for BMP ligands, serving to enhance ligand binding by differentially regulating BMPR1A/ALK3 and BMPR1B/ALK6 receptor trafficking. Promotes epithelial cell adhesion, focal adhesion formation and integrin signaling during epithelial cell spreading on fibronectin. By interacting with the scaffolding protein beta-arrestin2/ARRB2, regulates migration or actin cytoskeleton and promotes the activation of CDC42 as well as the inhibition of NF-kappa-B. In gonadotrope cells, acts as an inhibin A coreceptor and regulates follicle-stimulating hormone (FSH) levels and female fertility. Plays a role in the inhibition of directed and random cell migration in epithelial cells by altering the actin cytoskeletal organization. Participates in epithelial-mesenchymal transformation (EMT) upon binding to BMP2 or TGFB2, by activating the PAR6/SMURF1/RHOA pathway. This Mus musculus (Mouse) protein is Transforming growth factor beta receptor type 3 (Tgfbr3).